Here is a 198-residue protein sequence, read N- to C-terminus: Ribonuclease HII (198 aa).

One can recognise an RNase H type-2 domain in the interval Gln-10–Ser-198. A divalent metal cation-binding residues include Asp-16, Glu-17, and Asp-108.

This sequence belongs to the RNase HII family. Mn(2+) serves as cofactor. Requires Mg(2+) as cofactor.

The protein resides in the cytoplasm. It carries out the reaction Endonucleolytic cleavage to 5'-phosphomonoester.. Endonuclease that specifically degrades the RNA of RNA-DNA hybrids. This chain is Ribonuclease HII, found in Shigella dysenteriae serotype 1 (strain Sd197).